We begin with the raw amino-acid sequence, 224 residues long: MTLKNKSIVVLLSGGLDSSTVTSIAKKSEAKIFGLSFDYGQRHKKELHSASTIAKHFDIQEFKIIKLDLSLWGGSSLTDTKKNIPTEGVQTNKIPNTYVPGRNTIFISVALSYAEAIDADFIGLGVNALDYSGYPDCRPDYIKKFQELADLANKRGRENNPIKLWTPLLDLNKEQIIQLAMDNHVPLDKTWSCYSGDAKPCGKCDSCRIRNTAYKKWLNNKNKK.

An ATP-binding site is contributed by 12–22 (LSGGLDSSTVT). Zn(2+) is bound by residues Cys-193, Cys-201, Cys-204, and Cys-207.

Belongs to the QueC family. Zn(2+) serves as cofactor.

The enzyme catalyses 7-carboxy-7-deazaguanine + NH4(+) + ATP = 7-cyano-7-deazaguanine + ADP + phosphate + H2O + H(+). It functions in the pathway purine metabolism; 7-cyano-7-deazaguanine biosynthesis. Its function is as follows. Catalyzes the ATP-dependent conversion of 7-carboxy-7-deazaguanine (CDG) to 7-cyano-7-deazaguanine (preQ(0)). This chain is 7-cyano-7-deazaguanine synthase, found in Prochlorococcus marinus (strain MIT 9312).